The following is a 134-amino-acid chain: MLLQPKRTKFRKMHKGRNRGTKVNDNISFGQFALKAISRGRLKSCQIEAARRAISRAIKRQGKIWIRVFPDKPITKKPLEVRMGKGKGNVEYWVALIQPGKILYEINGVPKELAYNAFKLGASKLPVKTTLIGR.

Over residues 1–20 (MLLQPKRTKFRKMHKGRNRG) the composition is skewed to basic residues. The segment at 1 to 21 (MLLQPKRTKFRKMHKGRNRGT) is disordered.

This sequence belongs to the universal ribosomal protein uL16 family. As to quaternary structure, part of the 50S ribosomal subunit.

Binds 23S rRNA and is also seen to make contacts with the A and possibly P site tRNAs. The chain is Large ribosomal subunit protein uL16 from Blochmanniella pennsylvanica (strain BPEN).